A 354-amino-acid polypeptide reads, in one-letter code: Polyribonucleotide 5'-hydroxyl-kinase PF0112 (354 aa).

Position 36–43 (36–43) interacts with ATP; the sequence is GDVDTGKT.

A divalent metal cation serves as cofactor.

It catalyses the reaction a 5'-end dephospho-2'-deoxyribonucleoside-DNA + ATP = a 5'-end 5'-phospho-2'-deoxyribonucleoside-DNA + ADP + H(+). The enzyme catalyses a 5'-end dephospho-ribonucleoside-RNA + ATP = a 5'-end 5'-phospho-ribonucleoside-RNA + ADP + H(+). Its function is as follows. Polynucleotide kinase that can phosphorylate the 5'-hydroxyl groups of both single-stranded RNA (ssRNA) and single-stranded DNA (ssDNA). Exhibits a strong preference for ssRNA. The polypeptide is Polyribonucleotide 5'-hydroxyl-kinase PF0112 (Pyrococcus furiosus (strain ATCC 43587 / DSM 3638 / JCM 8422 / Vc1)).